The primary structure comprises 283 residues: ATP phosphoribosyltransferase (283 aa).

Belongs to the ATP phosphoribosyltransferase family. Long subfamily. It depends on Mg(2+) as a cofactor.

It localises to the cytoplasm. The catalysed reaction is 1-(5-phospho-beta-D-ribosyl)-ATP + diphosphate = 5-phospho-alpha-D-ribose 1-diphosphate + ATP. The protein operates within amino-acid biosynthesis; L-histidine biosynthesis; L-histidine from 5-phospho-alpha-D-ribose 1-diphosphate: step 1/9. Feedback inhibited by histidine. In terms of biological role, catalyzes the condensation of ATP and 5-phosphoribose 1-diphosphate to form N'-(5'-phosphoribosyl)-ATP (PR-ATP). Has a crucial role in the pathway because the rate of histidine biosynthesis seems to be controlled primarily by regulation of HisG enzymatic activity. In Rhodococcus opacus (strain B4), this protein is ATP phosphoribosyltransferase.